The primary structure comprises 297 residues: ER membrane protein complex subunit 2 (297 aa).

Ala-2 carries the N-acetylalanine modification. TPR repeat units follow at residues 87 to 120 (HRVK…DPTN), 155 to 188 (QEAW…NPHN), and 192 to 225 (CQQY…NNRN). Lys-255 is modified (N6-acetyllysine).

The protein belongs to the EMC2 family. As to quaternary structure, component of the ER membrane protein complex (EMC). Interacts with WNK1 (via amphipathic alpha-helix region); promoting the ER membrane protein complex assembly by preventing EMC2 ubiquitination. In terms of processing, ubiquitinated when soluble in the cytoplasm, leading to its degradation by the proteasome. Interaction with EMC2 prevents its ubiquitination and degradation.

The protein localises to the endoplasmic reticulum membrane. Functionally, part of the endoplasmic reticulum membrane protein complex (EMC) that enables the energy-independent insertion into endoplasmic reticulum membranes of newly synthesized membrane proteins. Preferentially accommodates proteins with transmembrane domains that are weakly hydrophobic or contain destabilizing features such as charged and aromatic residues. Involved in the cotranslational insertion of multi-pass membrane proteins in which stop-transfer membrane-anchor sequences become ER membrane spanning helices. It is also required for the post-translational insertion of tail-anchored/TA proteins in endoplasmic reticulum membranes. By mediating the proper cotranslational insertion of N-terminal transmembrane domains in an N-exo topology, with translocated N-terminus in the lumen of the ER, controls the topology of multi-pass membrane proteins like the G protein-coupled receptors. By regulating the insertion of various proteins in membranes, it is indirectly involved in many cellular processes. The protein is ER membrane protein complex subunit 2 of Homo sapiens (Human).